Consider the following 320-residue polypeptide: tRNA N6-adenosine threonylcarbamoyltransferase (320 aa).

Residues H114 and H118 each coordinate Fe cation. Residues 136–140 (VVSGG), D169, G182, D186, and N273 contribute to the substrate site. Residue D297 participates in Fe cation binding.

The protein belongs to the KAE1 / TsaD family. Fe(2+) serves as cofactor.

It is found in the cytoplasm. It catalyses the reaction L-threonylcarbamoyladenylate + adenosine(37) in tRNA = N(6)-L-threonylcarbamoyladenosine(37) in tRNA + AMP + H(+). In terms of biological role, required for the formation of a threonylcarbamoyl group on adenosine at position 37 (t(6)A37) in tRNAs that read codons beginning with adenine. Is involved in the transfer of the threonylcarbamoyl moiety of threonylcarbamoyl-AMP (TC-AMP) to the N6 group of A37, together with TsaE and TsaB. TsaD likely plays a direct catalytic role in this reaction. The sequence is that of tRNA N6-adenosine threonylcarbamoyltransferase from Ureaplasma parvum serovar 3 (strain ATCC 27815 / 27 / NCTC 11736).